A 236-amino-acid chain; its full sequence is MAEAEDSPGEQEAAASKPLFAGLSDVSISQDIPIEGEITIPSRARAQEHDSSTLNESIRRTIMRDLKAVGRKFMHVLYPRKSNALLRDWDLWGPLILCVTLALMLQKSSIDGKNDGGGPEFAEVFVIIWFGAVTITLNSKLLGGNISFFQSLCVLGYCILPLNIAMLICRLLLLAGQGPINFMIRLFVVLLMFAWSVVASTAFLADSQPPNRKALAVYPVFLFYFVISWMILTFTP.

N-acetylalanine is present on A2. At 2–84 the chain is on the cytoplasmic side; that stretch reads AEAEDSPGEQ…HVLYPRKSNA (83 aa). At S7 the chain carries Phosphoserine. A helical transmembrane segment spans residues 85 to 105; that stretch reads LLRDWDLWGPLILCVTLALML. The Lumenal segment spans residues 106–116; that stretch reads QKSSIDGKNDG. Residues 117 to 137 form a helical membrane-spanning segment; it reads GGPEFAEVFVIIWFGAVTITL. The Cytoplasmic segment spans residues 138–147; the sequence is NSKLLGGNIS. A helical transmembrane segment spans residues 148–168; sequence FFQSLCVLGYCILPLNIAMLI. The Lumenal portion of the chain corresponds to 169 to 185; the sequence is CRLLLLAGQGPINFMIR. The helical transmembrane segment at 186–206 threads the bilayer; sequence LFVVLLMFAWSVVASTAFLAD. The Cytoplasmic segment spans residues 207 to 213; the sequence is SQPPNRK. A helical membrane pass occupies residues 214–234; sequence ALAVYPVFLFYFVISWMILTF. Over 235–236 the chain is Lumenal; that stretch reads TP.

Belongs to the YIP1 family. Predominantly interacts with YIPF1 or YIPF2, but may also form a ternary complex with YIPF1 and YIPF2. This interaction may stabilize YIPF1 and YIPF2.

The protein localises to the golgi apparatus membrane. May be required for stable YIPF1 and YIPF2 protein expression. The polypeptide is Protein YIPF6 (Yipf6) (Mus musculus (Mouse)).